Consider the following 497-residue polypeptide: FAD-linked oxidoreductase fogF (497 aa).

A signal peptide spans 1–18; sequence MRRNILTALACSWLTAHA. The FAD-binding PCMH-type domain maps to 59–229; the sequence is NAPTYAGAIS…TSATYKLHKL (171 aa).

The protein belongs to the oxygen-dependent FAD-linked oxidoreductase family. FAD is required as a cofactor.

It functions in the pathway secondary metabolite biosynthesis. Functionally, FAD-linked oxidoreductase; part of the gene cluster that mediates the biosynthesis of flavoglaucin and congeners (including aspergin, dihydroauroglaucin and auroglaucin), prenylated salicylaldehyde derivatives carrying a saturated or an unsaturated C-7 side chain. The PKS fogA releases the carboxylic acid (8E,10E,12E)-3,5,7-trihydroxytetradeca-8,10,12-trienoic acid as its product, as well as derivatives with one and two double bonds. FogA is indeed able to reduce the initial triketide, thus being at least partially responsible for the differently saturated heptyl side chains of flavoglaucin congeners. The oxidoreductases fogB, fogC and fogD modify the nascent polyketide in fogA-bound form and, together, fogA, fogB, fogC and fogD are necessary for the formation of the aromatic core and the cyclized PKS products are released as salicyl alcohols. In particular, fogB is responsible for oxidation of a hydroxyl group or reduction of remaining double bond(s) at the C-7 residue whereas fogD is probably involved in the reductive release of the modified PKS products. The cytochrome P450 monooxygenase fogE is then responsible for the hydroxylation at C-3 of the benzene ring. The fogE products are substrates of the prenyltransferase fogH and the prenylated benzyl alcohols are subsequently oxidized by the fogF to produce the final aryl aldehydes flavoglaucin and congeners. The short-chain dehydrogenase fogG does not seem to be involved in the biosynthesis of the prenylated salicylaldehyde derivatives. This chain is FAD-linked oxidoreductase fogF, found in Aspergillus ruber (strain CBS 135680).